A 118-amino-acid polypeptide reads, in one-letter code: Large ribosomal subunit protein bL20 (118 aa).

The protein belongs to the bacterial ribosomal protein bL20 family.

Functionally, binds directly to 23S ribosomal RNA and is necessary for the in vitro assembly process of the 50S ribosomal subunit. It is not involved in the protein synthesizing functions of that subunit. In Pseudomonas syringae pv. syringae (strain B728a), this protein is Large ribosomal subunit protein bL20.